The chain runs to 275 residues: Large ribosomal subunit protein uL2 (275 aa).

Disordered regions lie at residues lysine 28 to lysine 59 and alanine 224 to arginine 275. Positions aspartate 35 to asparagine 46 are enriched in polar residues. Basic residues predominate over residues threonine 50–lysine 59.

This sequence belongs to the universal ribosomal protein uL2 family. In terms of assembly, part of the 50S ribosomal subunit. Forms a bridge to the 30S subunit in the 70S ribosome.

Its function is as follows. One of the primary rRNA binding proteins. Required for association of the 30S and 50S subunits to form the 70S ribosome, for tRNA binding and peptide bond formation. It has been suggested to have peptidyltransferase activity; this is somewhat controversial. Makes several contacts with the 16S rRNA in the 70S ribosome. This Paraburkholderia phymatum (strain DSM 17167 / CIP 108236 / LMG 21445 / STM815) (Burkholderia phymatum) protein is Large ribosomal subunit protein uL2.